A 161-amino-acid chain; its full sequence is Protein-export protein SecB (161 aa).

Belongs to the SecB family. In terms of assembly, homotetramer, a dimer of dimers. One homotetramer interacts with 1 SecA dimer.

The protein localises to the cytoplasm. Functionally, one of the proteins required for the normal export of preproteins out of the cell cytoplasm. It is a molecular chaperone that binds to a subset of precursor proteins, maintaining them in a translocation-competent state. It also specifically binds to its receptor SecA. The chain is Protein-export protein SecB from Shewanella pealeana (strain ATCC 700345 / ANG-SQ1).